We begin with the raw amino-acid sequence, 235 residues long: Ubiquinone biosynthesis O-methyltransferase (235 aa).

Residues R40, G60, D81, and M125 each coordinate S-adenosyl-L-methionine.

Belongs to the methyltransferase superfamily. UbiG/COQ3 family.

The catalysed reaction is a 3-demethylubiquinol + S-adenosyl-L-methionine = a ubiquinol + S-adenosyl-L-homocysteine + H(+). The enzyme catalyses a 3-(all-trans-polyprenyl)benzene-1,2-diol + S-adenosyl-L-methionine = a 2-methoxy-6-(all-trans-polyprenyl)phenol + S-adenosyl-L-homocysteine + H(+). Its pathway is cofactor biosynthesis; ubiquinone biosynthesis. Its function is as follows. O-methyltransferase that catalyzes the 2 O-methylation steps in the ubiquinone biosynthetic pathway. This Nitrosomonas europaea (strain ATCC 19718 / CIP 103999 / KCTC 2705 / NBRC 14298) protein is Ubiquinone biosynthesis O-methyltransferase.